Reading from the N-terminus, the 413-residue chain is DNA primase DnaG (413 aa).

A Toprim domain is found at 168-246 (PNLIIVEGRA…KIDYVARAPV (79 aa)). Residues glutamate 174, aspartate 219, and aspartate 221 each contribute to the Mg(2+) site.

It belongs to the archaeal DnaG primase family. Forms a ternary complex with MCM helicase and DNA. Component of the archaeal exosome complex. Requires Mg(2+) as cofactor.

The enzyme catalyses ssDNA + n NTP = ssDNA/pppN(pN)n-1 hybrid + (n-1) diphosphate.. In terms of biological role, RNA polymerase that catalyzes the synthesis of short RNA molecules used as primers for DNA polymerase during DNA replication. Also part of the exosome, which is a complex involved in RNA degradation. Acts as a poly(A)-binding protein that enhances the interaction between heteromeric, adenine-rich transcripts and the exosome. The sequence is that of DNA primase DnaG from Metallosphaera sedula (strain ATCC 51363 / DSM 5348 / JCM 9185 / NBRC 15509 / TH2).